The sequence spans 242 residues: NLP effector protein 8 (242 aa).

A signal peptide spans 1-17 (MHLTVFYLVALCTFASA). The Conserved undecapeptide motif motif lies at 108 to 118 (AIMYAWYFPRD). Residues 127 to 133 (GHRNAWE) carry the Conserved heptapeptide motif motif. The N-linked (GlcNAc...) asparagine glycan is linked to Asn206.

The protein belongs to the Necrosis inducing protein (NPP1) family.

The protein resides in the secreted. Functionally, probable secreted effector that may act as a pathogen-associated molecular pattern (PAMP) recognized by the plant immune system. In Plasmopara viticola (Downy mildew of grapevine), this protein is NLP effector protein 8.